A 316-amino-acid polypeptide reads, in one-letter code: Methionyl-tRNA formyltransferase (316 aa).

Residue 110 to 113 (SLLP) participates in (6S)-5,6,7,8-tetrahydrofolate binding.

This sequence belongs to the Fmt family.

It carries out the reaction L-methionyl-tRNA(fMet) + (6R)-10-formyltetrahydrofolate = N-formyl-L-methionyl-tRNA(fMet) + (6S)-5,6,7,8-tetrahydrofolate + H(+). In terms of biological role, attaches a formyl group to the free amino group of methionyl-tRNA(fMet). The formyl group appears to play a dual role in the initiator identity of N-formylmethionyl-tRNA by promoting its recognition by IF2 and preventing the misappropriation of this tRNA by the elongation apparatus. In Bacillus licheniformis (strain ATCC 14580 / DSM 13 / JCM 2505 / CCUG 7422 / NBRC 12200 / NCIMB 9375 / NCTC 10341 / NRRL NRS-1264 / Gibson 46), this protein is Methionyl-tRNA formyltransferase.